The sequence spans 223 residues: 7-cyano-7-deazaguanine synthase (223 aa).

ATP is bound at residue 15-25; that stretch reads FSGGQDSTTCL. 4 residues coordinate Zn(2+): cysteine 191, cysteine 200, cysteine 203, and cysteine 206.

The protein belongs to the QueC family. As to quaternary structure, homodimer. Zn(2+) is required as a cofactor.

It catalyses the reaction 7-carboxy-7-deazaguanine + NH4(+) + ATP = 7-cyano-7-deazaguanine + ADP + phosphate + H2O + H(+). It functions in the pathway purine metabolism; 7-cyano-7-deazaguanine biosynthesis. Catalyzes the ATP-dependent conversion of 7-carboxy-7-deazaguanine (CDG) to 7-cyano-7-deazaguanine (preQ(0)). This chain is 7-cyano-7-deazaguanine synthase, found in Staphylococcus saprophyticus subsp. saprophyticus (strain ATCC 15305 / DSM 20229 / NCIMB 8711 / NCTC 7292 / S-41).